A 1070-amino-acid chain; its full sequence is DNA-directed RNA polymerase subunit beta (1070 aa).

The protein belongs to the RNA polymerase beta chain family. As to quaternary structure, in plastids the minimal PEP RNA polymerase catalytic core is composed of four subunits: alpha, beta, beta', and beta''. When a (nuclear-encoded) sigma factor is associated with the core the holoenzyme is formed, which can initiate transcription.

Its subcellular location is the plastid. The protein localises to the chloroplast. It catalyses the reaction RNA(n) + a ribonucleoside 5'-triphosphate = RNA(n+1) + diphosphate. In terms of biological role, DNA-dependent RNA polymerase catalyzes the transcription of DNA into RNA using the four ribonucleoside triphosphates as substrates. This Phalaenopsis aphrodite subsp. formosana (Moth orchid) protein is DNA-directed RNA polymerase subunit beta.